A 172-amino-acid chain; its full sequence is Large ribosomal subunit protein uL10 (172 aa).

It belongs to the universal ribosomal protein uL10 family. Part of the ribosomal stalk of the 50S ribosomal subunit. The N-terminus interacts with L11 and the large rRNA to form the base of the stalk. The C-terminus forms an elongated spine to which L12 dimers bind in a sequential fashion forming a multimeric L10(L12)X complex.

Its function is as follows. Forms part of the ribosomal stalk, playing a central role in the interaction of the ribosome with GTP-bound translation factors. This is Large ribosomal subunit protein uL10 from Macrococcus caseolyticus (strain JCSC5402) (Macrococcoides caseolyticum).